The primary structure comprises 260 residues: Centromere protein K (260 aa).

A coiled-coil region spans residues 84–173; the sequence is EEELQKVKKE…KKLMNALGEF (90 aa).

The protein belongs to the CENP-K/MCM22 family. Component of the CENPA-HI complex, at least composed of CENPH, CENPI, CENPK, CENPL, CENPM, CENPO and CENPP.

The protein resides in the nucleus. Its subcellular location is the chromosome. It is found in the centromere. It localises to the kinetochore. Component of the CENPA-HI complex, a centromeric complex involved in assembly of kinetochore proteins, mitotic progression and chromosome segregation. The sequence is that of Centromere protein K (CENPK) from Gallus gallus (Chicken).